Reading from the N-terminus, the 625-residue chain is DELLA protein SLR1 (625 aa).

A disordered region spans residues 1–34 (MKREYQEAGGSSGGGSSADMGSCKDKVMAGAAGE). The DELLA motif motif lies at 39–43 (DELLA). The tract at residues 167–209 (TADPSAADSARDTKRMRTGGGSTSSSSSSSSSLGGGASRGSVV) is disordered. Positions 189 to 198 (TSSSSSSSSS) are enriched in low complexity. Positions 232–621 (VDTQEAGIRL…RPLIATSAWR (390 aa)) constitute a GRAS domain. Positions 239–294 (IRLVHALLACAEAVQQENFAAAEALVKQIPTLAASQGGAMRKVAAYFGEALARRVY) are leucine repeat I (LRI). A required for possible homodimerization region spans residues 241–278 (LVHALLACAEAVQQENFAAAEALVKQIPTLAASQGGAM). Residues 246 to 250 (LACAE) carry the LxCxE motif motif. Residues 313-378 (HAHFYESCPY…GGPPSFRLTG (66 aa)) are VHIID. The short motif at 344–348 (VHVVD) is the VHIID element. The leucine repeat II (LRII) stretch occupies residues 392–431 (QVGWKLAQFAHTIRVDFQYRGLVAATLADLEPFMLQPEGE). The tract at residues 441–542 (IAVNSVFELH…EVYLGRQICN (102 aa)) is PFYRE. The LXXLL motif signature appears at 449-453 (LHRLL). Residues 545 to 621 (ACEGAERTER…RPLIATSAWR (77 aa)) form an SAW region.

It belongs to the GRAS family. DELLA subfamily. In terms of assembly, may be a homodimer. Interacts directly with the GID2 component of the SCF(GID2) complex. Interacts with GID1 in a GA-dependent manner, probably leading to its interaction with GID2 and its subsequent degradation. Interacts with D14 and GID1 in an strigolactone-dependent manner. Interacts with HD16/EL1. In terms of processing, phosphorylated on Ser/Thr residues in the N-terminal part. Both phosphorylated and unphosphorylated forms are degraded upon GA treatment, suggesting that phosphorylation does not trigger ubiquitination. Phosphorylated by HD16/EL1. Phosphorylation enhances its stability. Ubiquitinated. Upon GA application it is ubiquitinated by the SCF(GID2) complex, leading to its subsequent degradation. In terms of tissue distribution, expressed in nodes, internodes, leaf sheats of young seedlings and ears of adult plants. Weakly expressed in leaf blade and root.

The protein resides in the nucleus. Probable transcriptional regulator that acts as a repressor of the gibberellin (GA) signaling pathway. Probably acts by participating in large multiprotein complexes that repress transcription of GA-inducible genes. Upon GA application, it is degraded by the proteasome, allowing the GA signaling pathway. In contrast, its overexpression prevents the GA signaling pathway and induces a dwarf phenotype. This chain is DELLA protein SLR1, found in Oryza sativa subsp. japonica (Rice).